The following is a 365-amino-acid chain: 1-aminocyclopropane-1-carboxylate oxidase homolog 9 (365 aa).

The Fe2OG dioxygenase domain maps to Lys214–Ser313. The Fe cation site is built by His238, Asp240, and His294. Arg304 is a 2-oxoglutarate binding site.

Belongs to the iron/ascorbate-dependent oxidoreductase family. Requires Fe(2+) as cofactor.

In Arabidopsis thaliana (Mouse-ear cress), this protein is 1-aminocyclopropane-1-carboxylate oxidase homolog 9.